A 258-amino-acid polypeptide reads, in one-letter code: Ditrans,polycis-undecaprenyl-diphosphate synthase ((2E,6E)-farnesyl-diphosphate specific) (258 aa).

Aspartate 24 is a catalytic residue. Mg(2+) is bound at residue aspartate 24. Substrate contacts are provided by residues 25 to 28, tryptophan 29, arginine 37, histidine 41, and 69 to 71; these read GNGR and SSE. Asparagine 72 acts as the Proton acceptor in catalysis. Substrate-binding positions include tryptophan 73, arginine 75, arginine 192, and 198–200; that span reads RIS. Glutamate 211 contacts Mg(2+).

This sequence belongs to the UPP synthase family. Homodimer. The cofactor is Mg(2+).

It catalyses the reaction 8 isopentenyl diphosphate + (2E,6E)-farnesyl diphosphate = di-trans,octa-cis-undecaprenyl diphosphate + 8 diphosphate. Its function is as follows. Catalyzes the sequential condensation of isopentenyl diphosphate (IPP) with (2E,6E)-farnesyl diphosphate (E,E-FPP) to yield (2Z,6Z,10Z,14Z,18Z,22Z,26Z,30Z,34E,38E)-undecaprenyl diphosphate (di-trans,octa-cis-UPP). UPP is the precursor of glycosyl carrier lipid in the biosynthesis of bacterial cell wall polysaccharide components such as peptidoglycan and lipopolysaccharide. In Xanthomonas oryzae pv. oryzae (strain KACC10331 / KXO85), this protein is Ditrans,polycis-undecaprenyl-diphosphate synthase ((2E,6E)-farnesyl-diphosphate specific).